The primary structure comprises 276 residues: Orotidine 5'-phosphate decarboxylase (276 aa).

Residues Asp-40, 62-64 (KTH), 93-102 (DRKFIDIGNT), Tyr-228, and Arg-246 contribute to the substrate site. Lys-95 functions as the Proton donor in the catalytic mechanism.

The protein belongs to the OMP decarboxylase family.

The catalysed reaction is orotidine 5'-phosphate + H(+) = UMP + CO2. Its pathway is pyrimidine metabolism; UMP biosynthesis via de novo pathway; UMP from orotate: step 2/2. The sequence is that of Orotidine 5'-phosphate decarboxylase (pyrG) from Penicillium nalgiovense.